The following is a 389-amino-acid chain: Succinate--CoA ligase [ADP-forming] subunit beta (389 aa).

Residues 9 to 236 (RDLFEKHGVP…KTTADPLEEK (228 aa)) form the ATP-grasp domain. ATP-binding positions include lysine 45, 52–54 (GRG), alanine 94, and glutamate 99. Mg(2+) is bound by residues asparagine 191 and aspartate 205. Substrate-binding positions include asparagine 256 and 318-320 (GIT).

Belongs to the succinate/malate CoA ligase beta subunit family. Heterotetramer of two alpha and two beta subunits. It depends on Mg(2+) as a cofactor.

The catalysed reaction is succinate + ATP + CoA = succinyl-CoA + ADP + phosphate. It carries out the reaction GTP + succinate + CoA = succinyl-CoA + GDP + phosphate. It participates in carbohydrate metabolism; tricarboxylic acid cycle; succinate from succinyl-CoA (ligase route): step 1/1. Its function is as follows. Succinyl-CoA synthetase functions in the citric acid cycle (TCA), coupling the hydrolysis of succinyl-CoA to the synthesis of either ATP or GTP and thus represents the only step of substrate-level phosphorylation in the TCA. The beta subunit provides nucleotide specificity of the enzyme and binds the substrate succinate, while the binding sites for coenzyme A and phosphate are found in the alpha subunit. In Kocuria rhizophila (strain ATCC 9341 / DSM 348 / NBRC 103217 / DC2201), this protein is Succinate--CoA ligase [ADP-forming] subunit beta.